Consider the following 151-residue polypeptide: Large ribosomal subunit protein uL15 (151 aa).

A disordered region spans residues 1–58; it reads MELNQLKSVPKARNHKTKTLGRGHGSGLGKTSGRGQKGQKARKSGLTRPGFEGGQTPL. Residues 10 to 21 are compositionally biased toward basic residues; the sequence is PKARNHKTKTLG. The span at 22–36 shows a compositional bias: gly residues; that stretch reads RGHGSGLGKTSGRGQ.

This sequence belongs to the universal ribosomal protein uL15 family. In terms of assembly, part of the 50S ribosomal subunit.

Binds to the 23S rRNA. The polypeptide is Large ribosomal subunit protein uL15 (Mycoplasma pneumoniae (strain ATCC 29342 / M129 / Subtype 1) (Mycoplasmoides pneumoniae)).